A 71-amino-acid chain; its full sequence is Large ribosomal subunit protein bL31 (71 aa).

Zn(2+) is bound by residues C16, C18, C37, and C40.

The protein belongs to the bacterial ribosomal protein bL31 family. Type A subfamily. In terms of assembly, part of the 50S ribosomal subunit. The cofactor is Zn(2+).

In terms of biological role, binds the 23S rRNA. This Pseudomonas putida (strain GB-1) protein is Large ribosomal subunit protein bL31.